A 346-amino-acid polypeptide reads, in one-letter code: S-adenosylmethionine:tRNA ribosyltransferase-isomerase (346 aa).

It belongs to the QueA family. As to quaternary structure, monomer.

Its subcellular location is the cytoplasm. The enzyme catalyses 7-aminomethyl-7-carbaguanosine(34) in tRNA + S-adenosyl-L-methionine = epoxyqueuosine(34) in tRNA + adenine + L-methionine + 2 H(+). Its pathway is tRNA modification; tRNA-queuosine biosynthesis. Its function is as follows. Transfers and isomerizes the ribose moiety from AdoMet to the 7-aminomethyl group of 7-deazaguanine (preQ1-tRNA) to give epoxyqueuosine (oQ-tRNA). In Shewanella frigidimarina (strain NCIMB 400), this protein is S-adenosylmethionine:tRNA ribosyltransferase-isomerase.